The primary structure comprises 258 residues: ADP-ribose glycohydrolase MACROD1 (258 aa).

Residues Lys29, Lys36, and Lys62 each carry the N6-succinyllysine modification. A Glycyl lysine isopeptide (Lys-Gly) (interchain with G-Cter in SUMO2) cross-link involves residue Lys71. The region spanning 74–255 (NPKYKKDKQL…IYQERLPHYF (182 aa)) is the Macro domain. 92-94 (GDI) contributes to the substrate binding site. Lys96 is subject to N6-acetyllysine. Residues 105-107 (AAN), 112-117 (GGGGVD), 200-206 (ISTGVFG), and Phe239 each bind substrate.

This sequence belongs to the MacroD-type family. MacroD1/2-like subfamily. Interacts with ESR1; Interacts in a manner that is estrogen independent but is enhanced by estrogen. Interacts (via macro domain) with AR.

It localises to the nucleus. The catalysed reaction is 3''-O-acetyl-ADP-D-ribose + H2O = ADP-D-ribose + acetate + H(+). It catalyses the reaction 2''-O-acetyl-ADP-D-ribose + H2O = ADP-D-ribose + acetate + H(+). The enzyme catalyses 4-O-(ADP-D-ribosyl)-L-aspartyl-[protein] + H2O = L-aspartyl-[protein] + ADP-D-ribose + H(+). It carries out the reaction 5-O-(ADP-D-ribosyl)-L-glutamyl-[protein] + H2O = L-glutamyl-[protein] + ADP-D-ribose + H(+). The catalysed reaction is alpha-NAD(+) + H2O = ADP-D-ribose + nicotinamide + H(+). Subject to competitive inhibition by the product ADP-ribose. Its function is as follows. Removes ADP-ribose from aspartate and glutamate residues in proteins bearing a single ADP-ribose moiety. Inactive towards proteins bearing poly-ADP-ribose. Deacetylates O-acetyl-ADP ribose, a signaling molecule generated by the deacetylation of acetylated lysine residues in histones and other proteins. Plays a role in estrogen signaling. Binds to androgen receptor (AR) and amplifies the transactivation function of AR in response to androgen. May play an important role in carcinogenesis and/or progression of hormone-dependent cancers by feed-forward mechanism that activates ESR1 transactivation. Could be an ESR1 coactivator, providing a positive feedback regulatory loop for ESR1 signal transduction. Could be involved in invasive growth by down-regulating CDH1 in endometrial cancer cells. Enhances ESR1-mediated transcription activity. The protein is ADP-ribose glycohydrolase MACROD1 (Macrod1) of Rattus norvegicus (Rat).